We begin with the raw amino-acid sequence, 907 residues long: Chloride channel protein 2 (907 aa).

Over methionine 1–valine 93 the chain is Cytoplasmic. The essential for channel gating by both voltage and cell volume stretch occupies residues glutamine 22–alanine 40. Threonine 26 is modified (phosphothreonine). Residues glutamate 42 to tryptophan 55 form a modulates channel gating by both voltage and cell volume region. Transmembrane regions (helical) follow at residues glycine 94–tryptophan 127 and isoleucine 136–leucine 161. The Selectivity filter part_1 signature appears at glycine 167 to proline 171. An intramembrane region (helical) is located at residues isoleucine 170–leucine 177. The next 2 helical transmembrane spans lie at leucine 186–serine 204 and glutamate 211–leucine 229. Positions glycine 209–proline 213 match the Selectivity filter part_2 motif. 2 intramembrane regions (helical) span residues methionine 245–cysteine 257 and proline 261–isoleucine 269. Helical transmembrane passes span tyrosine 281–tryptophan 301, leucine 327–methionine 355, phenylalanine 364–leucine 383, alanine 435–alanine 455, and glycine 463–tryptophan 486. The short motif at glycine 463 to proline 467 is the Selectivity filter part_3 element. Residues glycine 503 to valine 517 constitute an intramembrane region (helical). Positions threonine 518–histidine 519 form an intramembrane region, note=Loop between two helices. Residues threonine 520–threonine 531 constitute an intramembrane region (helical). The segment at residues glycine 532–histidine 536 is an intramembrane region (note=Loop between two helices). Residues isoleucine 537–leucine 554 form a helical membrane-spanning segment. Topologically, residues glutamine 555–glutamine 907 are cytoplasmic. Positions methionine 590–proline 648 constitute a CBS 1 domain. Residues arginine 650–lysine 660 show a composition bias toward basic residues. The tract at residues arginine 650–threonine 720 is disordered. The span at serine 664–serine 678 shows a compositional bias: low complexity. Residues glutamine 696–leucine 705 are compositionally biased toward basic residues. The segment covering serine 710–threonine 720 has biased composition (polar residues). Serine 767 is subject to Phosphoserine. Residues isoleucine 799 to valine 859 form the CBS 2 domain. Positions leucine 821–leucine 822 match the Basolateral membrane sorting motif. A disordered region spans residues serine 865–glutamine 907.

Belongs to the chloride channel (TC 2.A.49) family. ClC-2/CLCN2 subfamily. Homodimer. Interacts with auxiliary subunit HEPACAM. Phosphorylated. Activated by dephosphorylation. As to expression, ubiquitously expressed. Expressed in neurons and glial cells (at protein level).

Its subcellular location is the cell membrane. The protein resides in the basolateral cell membrane. The protein localises to the cell projection. It is found in the dendritic spine membrane. It localises to the axon. The enzyme catalyses chloride(in) = chloride(out). It catalyses the reaction thiocyanate(in) = thiocyanate(out). It carries out the reaction bromide(in) = bromide(out). The catalysed reaction is nitrate(in) = nitrate(out). The enzyme catalyses iodide(out) = iodide(in). Its activity is regulated as follows. Common gate kinetics are down-regulated by intracellular ATP. Inhibited by AK-42, a derivative of meclofenamate. Inhibited by Cd(2+). Inhibited by Zn(2+) and PKC activation. Inhibited at acidic pH. CCLN2:HEPACAM channel conductance is up-regulated upon hypo-osmolarity. In terms of biological role, voltage-gated and osmosensitive chloride channel. Forms a homodimeric channel where each subunit has its own ion conduction pathway. Conducts double-barreled currents controlled by two types of gates, two fast glutamate gates that control each subunit independently and a slow common gate that opens and shuts off both subunits simultaneously. Displays inward rectification currents activated upon membrane hyperpolarization and extracellular hypotonicity. Contributes to chloride conductance involved in neuron excitability. In hippocampal neurons, generates a significant part of resting membrane conductance and provides an additional chloride efflux pathway to prevent chloride accumulation in dendrites upon GABA receptor activation. In glia, associates with the auxiliary subunit HEPACAM/GlialCAM at astrocytic processes and myelinated fiber tracts where it may regulate transcellular chloride flux buffering extracellular chloride and potassium concentrations. Regulates aldosterone production in adrenal glands. The opening of CLCN2 channels at hyperpolarized membrane potentials in the glomerulosa causes cell membrane depolarization, activation of voltage-gated calcium channels and increased expression of aldosterone synthase, the rate-limiting enzyme for aldosterone biosynthesis. Contributes to chloride conductance in retinal pigment epithelium involved in phagocytosis of shed photoreceptor outer segments and photoreceptor renewal. Conducts chloride currents at the basolateral membrane of epithelial cells with a role in chloride reabsorption rather than secretion. Permeable to small monovalent anions with chloride &gt; thiocyanate &gt; bromide &gt; nitrate &gt; iodide ion selectivity. The sequence is that of Chloride channel protein 2 (Clcn2) from Rattus norvegicus (Rat).